The chain runs to 486 residues: Glutamyl-tRNA(Gln) amidotransferase subunit A (486 aa).

Residues K75 and S150 each act as charge relay system in the active site. The active-site Acyl-ester intermediate is the S174.

Belongs to the amidase family. GatA subfamily. As to quaternary structure, heterotrimer of A, B and C subunits.

It carries out the reaction L-glutamyl-tRNA(Gln) + L-glutamine + ATP + H2O = L-glutaminyl-tRNA(Gln) + L-glutamate + ADP + phosphate + H(+). Functionally, allows the formation of correctly charged Gln-tRNA(Gln) through the transamidation of misacylated Glu-tRNA(Gln) in organisms which lack glutaminyl-tRNA synthetase. The reaction takes place in the presence of glutamine and ATP through an activated gamma-phospho-Glu-tRNA(Gln). The sequence is that of Glutamyl-tRNA(Gln) amidotransferase subunit A from Nostoc sp. (strain PCC 7120 / SAG 25.82 / UTEX 2576).